Here is a 337-residue protein sequence, read N- to C-terminus: Casein kinase I isoform alpha (337 aa).

The Protein kinase domain occupies 17–285 (YKLVRKIGSG…YLRQLFRILF (269 aa)). ATP contacts are provided by residues 23-31 (IGSGSFGDI) and lysine 46. Aspartate 136 (proton acceptor) is an active-site residue. Residues 309–325 (AASSSGQGQQAQTPTGK) show a composition bias toward low complexity. A disordered region spans residues 309 to 337 (AASSSGQGQQAQTPTGKQTDKSKSNMKGF).

The protein belongs to the protein kinase superfamily. CK1 Ser/Thr protein kinase family. Casein kinase I subfamily. Post-translationally, autophosphorylated.

It is found in the cytoplasm. It localises to the cytoskeleton. Its subcellular location is the microtubule organizing center. The protein localises to the centrosome. The protein resides in the chromosome. It is found in the centromere. It localises to the kinetochore. Its subcellular location is the nucleus speckle. The protein localises to the cilium basal body. The protein resides in the spindle. It catalyses the reaction L-seryl-[protein] + ATP = O-phospho-L-seryl-[protein] + ADP + H(+). It carries out the reaction L-threonyl-[protein] + ATP = O-phospho-L-threonyl-[protein] + ADP + H(+). Casein kinases are operationally defined by their preferential utilization of acidic proteins such as caseins as substrates. It can phosphorylate a large number of proteins. Participates in Wnt signaling. May play a role in segregating chromosomes during mitosis. May play a role in keratin cytoskeleton disassembly. The sequence is that of Casein kinase I isoform alpha (CSNK1A1) from Gallus gallus (Chicken).